We begin with the raw amino-acid sequence, 292 residues long: Aquaporin-3 (292 aa).

Topologically, residues 1–24 are cytoplasmic; the sequence is MGRQKELMNRCGEMLHIRYRLLRQ. The helical transmembrane segment at 25 to 42 threads the bilayer; the sequence is ALAECLGTLILVMFGCGS. The Extracellular portion of the chain corresponds to 43 to 56; sequence VAQVVLSRGTHGGF. The chain crosses the membrane as a helical span at residues 57–74; sequence LTINLAFGFAVTLGILVA. At 75–78 the chain is on the cytoplasmic side; it reads GQVS. Positions 79 to 92 form an intramembrane region, discontinuously helical; sequence GAHLNPAVTFAMCF. The short motif at 83–85 is the NPA 1 element; sequence NPA. The Cytoplasmic portion of the chain corresponds to 93–100; the sequence is LAREPWIK. The helical transmembrane segment at 101-121 threads the bilayer; that stretch reads LPIYALAQTLGAFLGAGIVFG. The Extracellular portion of the chain corresponds to 122 to 159; sequence LYYDAIWAFANNELFVSGPNGTAGIFATYPSGHLDMVN. Residue N141 is glycosylated (N-linked (GlcNAc...) asparagine). Residues 160 to 177 form a helical membrane-spanning segment; it reads GFFDQFIGTAALIVCVLA. At 178-189 the chain is on the cytoplasmic side; that stretch reads IVDPYNNPVPRG. The chain crosses the membrane as a helical span at residues 190-206; that stretch reads LEAFTVGLVVLVIGTSM. The Extracellular portion of the chain corresponds to 207–210; it reads GFNS. The segment at residues 211–224 is an intramembrane region (discontinuously helical); it reads GYAVNPARDFGPRL. Residues 215-217 carry the NPA 2 motif; that stretch reads NPA. Topologically, residues 225–242 are extracellular; that stretch reads FTALAGWGSEVFTTGRHW. Residues 243 to 264 form a helical membrane-spanning segment; sequence WWVPIVSPLLGSIAGVFVYQLM. Residues 265–292 lie on the Cytoplasmic side of the membrane; sequence IGCHLEQPPPSTEEENVKLAHMKHKEQI.

Belongs to the MIP/aquaporin (TC 1.A.8) family. In terms of assembly, homotetramer; each monomer provides an independent glycerol/water pore. Could also exist in other oligomeric states. In terms of tissue distribution, detected in principal cells in collecting ducts in kidney medulla (at protein level). Renal medulla and colon. Predominantly in the inner medulla. Expressed in basal layer of epidermal keratinocytes.

It localises to the cell membrane. The protein localises to the basolateral cell membrane. The catalysed reaction is glycerol(in) = glycerol(out). It catalyses the reaction H2O(in) = H2O(out). It carries out the reaction urea(in) = urea(out). The enzyme catalyses H2O2(out) = H2O2(in). In terms of biological role, aquaglyceroporins form homotetrameric transmembrane channels, with each monomer independently mediating glycerol and water transport across the plasma membrane along their osmotic gradient. Could also be permeable to urea. Also participates in cell permeability to H2O2 and H2O2-mediated signaling. In skin, transports glycerol to the epidermis and stratum corneum, where it maintains hydration, elasticity, and supports lipid biosynthesis for barrier repair. In kidney, contributes to the reabsorption of water, helping the body maintain proper fluid balance. In Mus musculus (Mouse), this protein is Aquaporin-3.